We begin with the raw amino-acid sequence, 190 residues long: MEKEMEDKEEFDEGEIEYTSYAGEHHLPLIMSLVDQELSEPYSIFTYRYFVYLWPQLCFLAFHKGKCVGTIVCKMGDHRQTFRGYIAMLVVIKPYRGRGIASELVTRAIKAMMESGCEEVTLEAEVSNKGALALYGRLGFIRAKRLYHYYLNGMDAFRLKLLFPKPRVPQIPSQVQTQQEYETFPRPRVP.

In terms of domain architecture, N-acetyltransferase spans 16–164; it reads IEYTSYAGEH…DAFRLKLLFP (149 aa).

The protein belongs to the acetyltransferase family. MAK3 subfamily. As to expression, expressed in roots, leaves, flowers and siliques.

Its subcellular location is the cytoplasm. It catalyses the reaction N-terminal L-methionyl-L-leucyl-[protein] + acetyl-CoA = N-terminal N(alpha)-acetyl-L-methionyl-L-leucyl-[protein] + CoA + H(+). It carries out the reaction N-terminal L-methionyl-L-isoleucyl-[protein] + acetyl-CoA = N-terminal N(alpha)-acetyl-L-methionyl-L-isoleucyl-[protein] + CoA + H(+). The catalysed reaction is N-terminal L-methionyl-L-phenylalanyl-[protein] + acetyl-CoA = N-terminal N(alpha)-acetyl-L-methionyl-L-phenylalanyl-[protein] + CoA + H(+). The enzyme catalyses N-terminal L-methionyl-L-tryptophyl-[protein] + acetyl-CoA = N-terminal N(alpha)-acetyl-L-methionyl-L-tryptophyl-[protein] + CoA + H(+). It catalyses the reaction N-terminal L-methionyl-L-tyrosyl-[protein] + acetyl-CoA = N-terminal N(alpha)-acetyl-L-methionyl-L-tyrosyl-[protein] + CoA + H(+). Probably required for N-acetylation of some chloroplast precursor proteins and efficient accumulation of thylakoid multiprotein complexes. In yeast, can replace the NatC complex (composed of MAK3, MAK10 and MAK31) by acetylating N termini of endogenous proteins and the N-terminus Met of L-A virus Gag protein. However, the formation of a NatC complex is not required for this function. This chain is N-alpha-acetyltransferase MAK3 (MAK3), found in Arabidopsis thaliana (Mouse-ear cress).